The sequence spans 417 residues: D-galactonate dehydratase family member RspA (417 aa).

Substrate contacts are provided by Gln-43 and His-127. The Proton donor/acceptor role is filled by Tyr-158. Position 223 (Asp-223) interacts with Mg(2+). The Proton donor/acceptor role is filled by His-225. 2 residues coordinate Mg(2+): Glu-249 and Glu-275. Residues Glu-275, Arg-296, His-325, Asp-329, and Glu-352 each coordinate substrate.

This sequence belongs to the mandelate racemase/muconate lactonizing enzyme family. GalD subfamily. The cofactor is Mg(2+).

It carries out the reaction D-gluconate = 2-dehydro-3-deoxy-D-gluconate + H2O. Its function is as follows. Has low D-gluconate dehydratase activity (in vitro), suggesting that it has no significant role in D-gluconate degradation in vivo. Has no detectable activity with a panel of 70 other acid sugars (in vitro). This chain is D-galactonate dehydratase family member RspA (rspA), found in Pantoea ananatis (strain LMG 20103).